The following is a 583-amino-acid chain: Phosphoglucomutase, cytoplasmic (583 aa).

A disordered region spans residues 1–20 (MANFKVSRVETTPFEGQKPG). 2 residues coordinate alpha-D-glucose 1,6-bisphosphate: R25 and S124. S124 functions as the Phosphoserine intermediate in the catalytic mechanism. Mg(2+) is bound by residues S124, D300, D302, and D304. S124 carries the phosphoserine modification. Residues D304, R305, T368, E387, S389, and K400 each coordinate alpha-D-glucose 1,6-bisphosphate.

This sequence belongs to the phosphohexose mutase family. In terms of assembly, monomer. Mg(2+) serves as cofactor.

The protein resides in the cytoplasm. The catalysed reaction is alpha-D-glucose 1-phosphate = alpha-D-glucose 6-phosphate. The enzyme catalyses O-phospho-L-seryl-[protein] + alpha-D-glucose 1-phosphate = alpha-D-glucose 1,6-bisphosphate + L-seryl-[protein]. It catalyses the reaction alpha-D-glucose 1,6-bisphosphate + L-seryl-[protein] = O-phospho-L-seryl-[protein] + alpha-D-glucose 6-phosphate. Catalyzes the reversible isomerization of alpha-D-glucose 1-phosphate to alpha-D-glucose 6-phosphate. The mechanism proceeds via the intermediate compound alpha-D-glucose 1,6-bisphosphate. This enzyme participates in both the breakdown and synthesis of glucose. This chain is Phosphoglucomutase, cytoplasmic (PGM1), found in Solanum tuberosum (Potato).